Reading from the N-terminus, the 165-residue chain is Small ribosomal subunit protein eS10 (165 aa).

The interval 92–165 (ATLRRSRPET…FGRGRGQAPQ (74 aa)) is disordered. Basic and acidic residues predominate over residues 97–128 (SRPETGRPRPKGLEGERPPRLPRGETDRDTYR). Residues 142–153 (AGAGAATEFQFR) are compositionally biased toward low complexity. Residues 154 to 165 (GGFGRGRGQAPQ) are compositionally biased toward gly residues.

It belongs to the eukaryotic ribosomal protein eS10 family. In terms of assembly, component of the small ribosomal subunit.

Its subcellular location is the cytoplasm. The protein resides in the nucleus. It is found in the nucleolus. Component of the 40S ribosomal subunit. The ribosome is a large ribonucleoprotein complex responsible for the synthesis of proteins in the cell. This is Small ribosomal subunit protein eS10 (rps10) from Xenopus laevis (African clawed frog).